Here is a 1181-residue protein sequence, read N- to C-terminus: Regulator of nonsense transcripts UPF2 (1181 aa).

Coiled coils occupy residues 6–41 (DESH…NNLN) and 260–309 (HKLL…AEAL). Residues 61–264 (TAVIKKLKQI…LLQSEHKLLL (204 aa)) enclose the MIF4G 1 domain. Disordered stretches follow at residues 309–348 (LDMQ…IWDD) and 375–459 (PKSN…KEKG). Basic and acidic residues predominate over residues 375-389 (PKSNEQSAKAKEKLS). The segment covering 398–412 (NQQTTEDTTEVSADS) has biased composition (polar residues). Basic and acidic residues predominate over residues 415 to 459 (MDDRSNAEQPKEKEEVEKEKAKDTKKEKGKEKDSEKKMEHEKEKG). Coiled-coil stretches lie at residues 425 to 451 (KEKE…SEKK) and 539 to 559 (VQML…MNIE). MIF4G domains are found at residues 469 to 655 (RLLQ…LCKP) and 672 to 871 (YVRK…NLRP). Residues 735–755 (DEFVVAVVDEVLEEIRVGLEL) are binds to UPF3. The segment covering 893-911 (EHASSGDKVSIERHSDTKP) has biased composition (basic and acidic residues). The segment at 893–991 (EHASSGDKVS…GPGSDDDKFR (99 aa)) is disordered. A compositionally biased stretch (low complexity) spans 912 to 926 (SNKSSSDVISSNGKS). Basic and acidic residues predominate over residues 927 to 941 (TAKDIRENGEAHGEE). Over residues 972–985 (GDGDDYDDGDGPGS) the composition is skewed to acidic residues. The interval 981 to 1181 (DGPGSDDDKF…GGGSYHARRK (201 aa)) is sufficient for interaction with UPF1 C-terminus. 2 interaction with UPF1 regions span residues 999-1023 (VDLE…EQRK) and 1066-1111 (ENGE…AELE). The interval 999–1102 (VDLEEQADFD…PSDCALVQST (104 aa)) is necessary for interaction with UPF1. Positions 1000 to 1021 (DLEEQADFDQELKALLQESMEQ) form a coiled coil. The segment at 1129–1181 (EEANGLGTQILNWTSGGSRGSTRTGEGSGKSGGSRHRFYYHQGGGGSYHARRK) is disordered. The segment covering 1142-1153 (TSGGSRGSTRTG) has biased composition (low complexity).

The protein belongs to the RENT2 family. Found in a post-splicing messenger ribonucleoprotein (mRNP) complex. Associates with the exon junction complex (EJC). Interacts with UPF1 and UPF3.

It is found in the nucleus. The protein localises to the nucleolus. Its subcellular location is the cytoplasm. It localises to the perinuclear region. Functionally, recruited by UPF3 associated with the EJC core at the cytoplasmic side of the nuclear envelope and the subsequent formation of an UPF1-UPF2-UPF3 surveillance complex (including UPF1 bound to release factors at the stalled ribosome) is believed to activate NMD. In cooperation with UPF3 stimulates both ATPase and RNA helicase activities of UPF1. Binds spliced mRNA. Involved in nonsense-mediated decay (NMD) of mRNAs containing premature stop codons by associating with the nuclear exon junction complex (EJC). Required for plant development and adaptation to environmental stresses, including plant defense and response to wounding. The polypeptide is Regulator of nonsense transcripts UPF2 (UPF2) (Arabidopsis thaliana (Mouse-ear cress)).